Consider the following 371-residue polypeptide: Anhydro-N-acetylmuramic acid kinase (371 aa).

Residue 12–20 (GTVLDGNID) participates in ATP binding.

This sequence belongs to the anhydro-N-acetylmuramic acid kinase family.

It carries out the reaction 1,6-anhydro-N-acetyl-beta-muramate + ATP + H2O = N-acetyl-D-muramate 6-phosphate + ADP + H(+). It participates in amino-sugar metabolism; 1,6-anhydro-N-acetylmuramate degradation. Its pathway is cell wall biogenesis; peptidoglycan recycling. Its function is as follows. Catalyzes the specific phosphorylation of 1,6-anhydro-N-acetylmuramic acid (anhMurNAc) with the simultaneous cleavage of the 1,6-anhydro ring, generating MurNAc-6-P. Is required for the utilization of anhMurNAc either imported from the medium or derived from its own cell wall murein, and thus plays a role in cell wall recycling. The polypeptide is Anhydro-N-acetylmuramic acid kinase (Rhizobium rhizogenes (strain K84 / ATCC BAA-868) (Agrobacterium radiobacter)).